Consider the following 288-residue polypeptide: Phosphatidylserine decarboxylase proenzyme (288 aa).

Catalysis depends on charge relay system; for autoendoproteolytic cleavage activity residues aspartate 89, histidine 146, and serine 252. Residue serine 252 is the Schiff-base intermediate with substrate; via pyruvic acid; for decarboxylase activity of the active site. The residue at position 252 (serine 252) is a Pyruvic acid (Ser); by autocatalysis.

Belongs to the phosphatidylserine decarboxylase family. PSD-B subfamily. Prokaryotic type I sub-subfamily. Heterodimer of a large membrane-associated beta subunit and a small pyruvoyl-containing alpha subunit. It depends on pyruvate as a cofactor. Is synthesized initially as an inactive proenzyme. Formation of the active enzyme involves a self-maturation process in which the active site pyruvoyl group is generated from an internal serine residue via an autocatalytic post-translational modification. Two non-identical subunits are generated from the proenzyme in this reaction, and the pyruvate is formed at the N-terminus of the alpha chain, which is derived from the carboxyl end of the proenzyme. The autoendoproteolytic cleavage occurs by a canonical serine protease mechanism, in which the side chain hydroxyl group of the serine supplies its oxygen atom to form the C-terminus of the beta chain, while the remainder of the serine residue undergoes an oxidative deamination to produce ammonia and the pyruvoyl prosthetic group on the alpha chain. During this reaction, the Ser that is part of the protease active site of the proenzyme becomes the pyruvoyl prosthetic group, which constitutes an essential element of the active site of the mature decarboxylase.

The protein localises to the cell membrane. The catalysed reaction is a 1,2-diacyl-sn-glycero-3-phospho-L-serine + H(+) = a 1,2-diacyl-sn-glycero-3-phosphoethanolamine + CO2. Its pathway is phospholipid metabolism; phosphatidylethanolamine biosynthesis; phosphatidylethanolamine from CDP-diacylglycerol: step 2/2. In terms of biological role, catalyzes the formation of phosphatidylethanolamine (PtdEtn) from phosphatidylserine (PtdSer). This Shewanella frigidimarina (strain NCIMB 400) protein is Phosphatidylserine decarboxylase proenzyme.